The sequence spans 190 residues: Xanthine phosphoribosyltransferase (190 aa).

Xanthine is bound by residues Leu20 and Asn27. 128–132 contacts 5-phospho-alpha-D-ribose 1-diphosphate; it reads ANGHA. Lys156 contributes to the xanthine binding site.

It belongs to the purine/pyrimidine phosphoribosyltransferase family. Xpt subfamily. In terms of assembly, homodimer.

It localises to the cytoplasm. The enzyme catalyses XMP + diphosphate = xanthine + 5-phospho-alpha-D-ribose 1-diphosphate. It participates in purine metabolism; XMP biosynthesis via salvage pathway; XMP from xanthine: step 1/1. Converts the preformed base xanthine, a product of nucleic acid breakdown, to xanthosine 5'-monophosphate (XMP), so it can be reused for RNA or DNA synthesis. The polypeptide is Xanthine phosphoribosyltransferase (Pseudomonas aeruginosa (strain LESB58)).